The following is a 459-amino-acid chain: LETM1 domain-containing protein LETM2, mitochondrial (459 aa).

The transit peptide at 1-25 (MAFYSYNSFLAIFWTRLPGHSVHPP) directs the protein to the mitochondrion. Residues 26-176 (CSHFPPLAFF…LLRTCADVFR (151 aa)) lie on the Mitochondrial intermembrane side of the membrane. The tract at residues 88–114 (GKPQPEQIPEEPKATDPQPTKDDQTEV) is disordered. Positions 97 to 111 (EEPKATDPQPTKDDQ) are enriched in basic and acidic residues. Residues 177-197 (LVPFVVFIIVPFMEFLIPVFL) traverse the membrane as a helical segment. Topologically, residues 198–459 (KLFPDMLPST…QNSKANSKGA (262 aa)) are mitochondrial matrix. In terms of domain architecture, Letm1 RBD spans 220-440 (KMMGAKLEIA…PAPQLNGTKI (221 aa)). The tract at residues 403 to 459 (LPPSIETPKTNLGIPSSPPPESKEDITDPAPQLNGTKILQAKSQETSQNSKANSKGA) is disordered. The span at 435–459 (LNGTKILQAKSQETSQNSKANSKGA) shows a compositional bias: polar residues.

As to expression, testis and sperm.

Its subcellular location is the mitochondrion inner membrane. This is LETM1 domain-containing protein LETM2, mitochondrial (Letm2) from Rattus norvegicus (Rat).